A 394-amino-acid chain; its full sequence is Chorismate synthase (394 aa).

Residues Arg-40 and Arg-46 each coordinate NADP(+). Residues 135–137 (RAS) and 255–256 (QA) contribute to the FMN site. The tract at residues 270–291 (RRRGSGAHDEIEPAGAGSRRVR) is disordered. FMN-binding positions include Gly-302, 317-321 (KPISS), and Arg-343.

Belongs to the chorismate synthase family. In terms of assembly, homotetramer. It depends on FMNH2 as a cofactor.

The enzyme catalyses 5-O-(1-carboxyvinyl)-3-phosphoshikimate = chorismate + phosphate. The protein operates within metabolic intermediate biosynthesis; chorismate biosynthesis; chorismate from D-erythrose 4-phosphate and phosphoenolpyruvate: step 7/7. Catalyzes the anti-1,4-elimination of the C-3 phosphate and the C-6 proR hydrogen from 5-enolpyruvylshikimate-3-phosphate (EPSP) to yield chorismate, which is the branch point compound that serves as the starting substrate for the three terminal pathways of aromatic amino acid biosynthesis. This reaction introduces a second double bond into the aromatic ring system. The chain is Chorismate synthase from Frankia casuarinae (strain DSM 45818 / CECT 9043 / HFP020203 / CcI3).